Reading from the N-terminus, the 273-residue chain is Glutamate transport system permease protein GluD (273 aa).

The next 5 helical transmembrane spans lie at 26–46 (ILPG…LALV), 64–84 (WFCA…LMIF), 100–120 (LAFA…IAEI), 150–170 (ILLP…MVIA), and 200–220 (LAAL…LTAL). The region spanning 30 to 221 (LWGTLKSAVF…VLNFSLTALA (192 aa)) is the ABC transmembrane type-1 domain. A disordered region spans residues 242 to 273 (PEQPDQGLETKDNVNVDWQDPDYKDLKTPGVQ). The span at 262 to 273 (PDYKDLKTPGVQ) shows a compositional bias: basic and acidic residues.

It belongs to the binding-protein-dependent transport system permease family. HisMQ subfamily. As to quaternary structure, the complex is composed of two ATP-binding proteins (GluA), two transmembrane proteins (GluC and GluD) and a solute-binding protein (GluB).

The protein localises to the cell membrane. Its function is as follows. Part of the ABC transporter complex GluABCD involved in glutamate uptake. Probably responsible for the translocation of the substrate across the membrane. The protein is Glutamate transport system permease protein GluD of Corynebacterium glutamicum (strain ATCC 13032 / DSM 20300 / JCM 1318 / BCRC 11384 / CCUG 27702 / LMG 3730 / NBRC 12168 / NCIMB 10025 / NRRL B-2784 / 534).